The sequence spans 427 residues: Peptidase B (427 aa).

Residues Lys195 and Asp200 each coordinate Mn(2+). Lys207 is an active-site residue. Residues Asp218, Asp277, and Glu279 each contribute to the Mn(2+) site. The active site involves Arg281.

The protein belongs to the peptidase M17 family. Homohexamer. Mn(2+) serves as cofactor.

Its subcellular location is the cytoplasm. The enzyme catalyses Release of an N-terminal amino acid, Xaa, from a peptide or arylamide. Xaa is preferably Glu or Asp but may be other amino acids, including Leu, Met, His, Cys and Gln.. Functionally, probably plays an important role in intracellular peptide degradation. The protein is Peptidase B of Escherichia coli (strain UTI89 / UPEC).